Here is a 68-residue protein sequence, read N- to C-terminus: uncharacterized protein (68 aa).

Positions 1–15 are cleaved as a signal peptide; it reads MTIIFLICLDASTQS. The tract at residues 14-68 is disordered; that stretch reads QSTTNNSINNNNNNNNNNNNNNNNNNNNNNNNNNNNNNNNNNNNNNSKVFDFNIF. 2 N-linked (GlcNAc...) asparagine glycosylation sites follow: Asn-18 and Asn-58. The span at 22–59 shows a compositional bias: low complexity; the sequence is NNNNNNNNNNNNNNNNNNNNNNNNNNNNNNNNNNNNNN.

It is found in the secreted. This is an uncharacterized protein from Dictyostelium discoideum (Social amoeba).